The following is a 289-amino-acid chain: ATP synthase gamma chain (289 aa).

The protein belongs to the ATPase gamma chain family. F-type ATPases have 2 components, CF(1) - the catalytic core - and CF(0) - the membrane proton channel. CF(1) has five subunits: alpha(3), beta(3), gamma(1), delta(1), epsilon(1). CF(0) has three main subunits: a, b and c.

The protein resides in the cell inner membrane. Its function is as follows. Produces ATP from ADP in the presence of a proton gradient across the membrane. The gamma chain is believed to be important in regulating ATPase activity and the flow of protons through the CF(0) complex. This chain is ATP synthase gamma chain, found in Cereibacter sphaeroides (strain ATCC 17029 / ATH 2.4.9) (Rhodobacter sphaeroides).